The sequence spans 445 residues: Glutamyl-tRNA(Gln) amidotransferase subunit D (445 aa).

One can recognise an Asparaginase/glutaminase domain in the interval S93–N425. Catalysis depends on residues T103, T179, D180, and K258.

It belongs to the asparaginase 1 family. GatD subfamily. In terms of assembly, heterodimer of GatD and GatE.

The catalysed reaction is L-glutamyl-tRNA(Gln) + L-glutamine + ATP + H2O = L-glutaminyl-tRNA(Gln) + L-glutamate + ADP + phosphate + H(+). Its function is as follows. Allows the formation of correctly charged Gln-tRNA(Gln) through the transamidation of misacylated Glu-tRNA(Gln) in organisms which lack glutaminyl-tRNA synthetase. The reaction takes place in the presence of glutamine and ATP through an activated gamma-phospho-Glu-tRNA(Gln). The GatDE system is specific for glutamate and does not act on aspartate. This Saccharolobus islandicus (strain M.16.27) (Sulfolobus islandicus) protein is Glutamyl-tRNA(Gln) amidotransferase subunit D.